The primary structure comprises 751 residues: Catalase-peroxidase (751 aa).

The segment at 1–21 (MSNESKCPFHQTAGGGTTNRD) is disordered. A cross-link (tryptophyl-tyrosyl-methioninium (Trp-Tyr) (with M-270)) is located at residues 90–244 (WHSAGTYRIG…LAAVQMGLIY (155 aa)). Catalysis depends on histidine 91, which acts as the Proton acceptor. The disordered stretch occupies residues 195 to 227 (YGKDQVKAQPPGQGDLVAEPAKHGEEQNRDLSA). Positions 214–227 (PAKHGEEQNRDLSA) are enriched in basic and acidic residues. The tryptophyl-tyrosyl-methioninium (Tyr-Met) (with W-90) cross-link spans 244–270 (YVNPEGPEGNPDPVASGKDIRETFGRM). Histidine 285 lines the heme b pocket. Residues 365 to 387 (AHQWRPKEGKGAGTVPDAHDPGK) form a disordered region.

Belongs to the peroxidase family. Peroxidase/catalase subfamily. As to quaternary structure, homodimer or homotetramer. It depends on heme b as a cofactor. In terms of processing, formation of the three residue Trp-Tyr-Met cross-link is important for the catalase, but not the peroxidase activity of the enzyme.

The catalysed reaction is H2O2 + AH2 = A + 2 H2O. It carries out the reaction 2 H2O2 = O2 + 2 H2O. Functionally, bifunctional enzyme with both catalase and broad-spectrum peroxidase activity. The chain is Catalase-peroxidase from Pseudomonas putida (strain ATCC 700007 / DSM 6899 / JCM 31910 / BCRC 17059 / LMG 24140 / F1).